The sequence spans 223 residues: Ras-related protein RABA4c (223 aa).

Residue 22-29 coordinates GTP; that stretch reads GDSAVGKS. An Effector region motif is present at residues 44–52; the sequence is SKATIGVEF. Residues 70-74, 128-131, and 158-159 each bind GTP; these read DTAGQ, NKTD, and SA. Residues Cys219 and Cys220 are each lipidated (S-geranylgeranyl cysteine).

Belongs to the small GTPase superfamily. Rab family.

Its subcellular location is the cell membrane. In terms of biological role, intracellular vesicle trafficking and protein transport. The sequence is that of Ras-related protein RABA4c (RABA4C) from Arabidopsis thaliana (Mouse-ear cress).